A 250-amino-acid chain; its full sequence is Cell division protein ZapD (250 aa).

It belongs to the ZapD family. In terms of assembly, interacts with FtsZ.

It localises to the cytoplasm. Cell division factor that enhances FtsZ-ring assembly. Directly interacts with FtsZ and promotes bundling of FtsZ protofilaments, with a reduction in FtsZ GTPase activity. This is Cell division protein ZapD from Pectobacterium carotovorum subsp. carotovorum (strain PC1).